A 473-amino-acid polypeptide reads, in one-letter code: Photosystem II CP43 reaction center protein (473 aa).

The propeptide occupies 1–14 (MKTLYSLRRFYPVE). An N-acetylthreonine modification is found at Thr-15. Thr-15 is modified (phosphothreonine). The next 5 membrane-spanning stretches (helical) occupy residues 69–93 (LFEVAHFVPEKPMYEQGLILLPHLA), 134–155 (LLGPETLEESFPFFGYVWKDRN), 178–200 (KALYFGGVYDTWAPGGGDVRKIT), 255–275 (KPFAWARRAFVWSGEAYLSYS), and 291–312 (WFNNTAYPSEFYGPTGPEASQA). Position 367 (Glu-367) interacts with [CaMn4O5] cluster. Residues 447–471 (RARAAAAGFEKGIDRDLEPVLSMTP) traverse the membrane as a helical segment.

Belongs to the PsbB/PsbC family. PsbC subfamily. PSII is composed of 1 copy each of membrane proteins PsbA, PsbB, PsbC, PsbD, PsbE, PsbF, PsbH, PsbI, PsbJ, PsbK, PsbL, PsbM, PsbT, PsbX, PsbY, PsbZ, Psb30/Ycf12, at least 3 peripheral proteins of the oxygen-evolving complex and a large number of cofactors. It forms dimeric complexes. It depends on Binds multiple chlorophylls and provides some of the ligands for the Ca-4Mn-5O cluster of the oxygen-evolving complex. It may also provide a ligand for a Cl- that is required for oxygen evolution. PSII binds additional chlorophylls, carotenoids and specific lipids. as a cofactor.

The protein resides in the plastid. Its subcellular location is the chloroplast thylakoid membrane. In terms of biological role, one of the components of the core complex of photosystem II (PSII). It binds chlorophyll and helps catalyze the primary light-induced photochemical processes of PSII. PSII is a light-driven water:plastoquinone oxidoreductase, using light energy to abstract electrons from H(2)O, generating O(2) and a proton gradient subsequently used for ATP formation. The polypeptide is Photosystem II CP43 reaction center protein (Acorus calamus var. americanus (American sweet flag)).